Consider the following 216-residue polypeptide: Ribosomal RNA large subunit methyltransferase E (216 aa).

S-adenosyl-L-methionine contacts are provided by Gly67, Trp69, Asp87, Asp103, and Asp128. Catalysis depends on Lys168, which acts as the Proton acceptor.

It belongs to the class I-like SAM-binding methyltransferase superfamily. RNA methyltransferase RlmE family.

It is found in the cytoplasm. The catalysed reaction is uridine(2552) in 23S rRNA + S-adenosyl-L-methionine = 2'-O-methyluridine(2552) in 23S rRNA + S-adenosyl-L-homocysteine + H(+). Specifically methylates the uridine in position 2552 of 23S rRNA at the 2'-O position of the ribose in the fully assembled 50S ribosomal subunit. The polypeptide is Ribosomal RNA large subunit methyltransferase E (Acinetobacter baumannii (strain AB307-0294)).